The following is a 310-amino-acid chain: Nucleotide-binding protein Ddes_0972 (310 aa).

Residue 30-37 participates in ATP binding; it reads GLSGAGKS. Position 82-85 (82-85) interacts with GTP; sequence DLRQ.

This sequence belongs to the RapZ-like family.

Displays ATPase and GTPase activities. This chain is Nucleotide-binding protein Ddes_0972, found in Desulfovibrio desulfuricans (strain ATCC 27774 / DSM 6949 / MB).